The chain runs to 1699 residues: Genome polyprotein (1699 aa).

Residues 1-19 (MKMASNDASAAAVVNSNND) are compositionally biased toward low complexity. Residues 1–78 (MKMASNDASA…PPPPPNGEDE (78 aa)) form a disordered region. The segment at 1–116 (MKMASNDASA…AFSVPPLNQR (116 aa)) is interaction with host MAP1LC3A/LC3. Positions 46-74 (QPPPRETPQRPPRPPTPELVKKIPPPPPN) are enriched in pro residues. An interaction with NTPase region spans residues 117 to 330 (ENRDAKEPLT…APLLGDYELQ (214 aa)). An interaction with NS4 region spans residues 233–330 (RPYQDWNRKP…APLLGDYELQ (98 aa)). Host ER membrane association regions lie at residues 250–281 (KLKKVANVFLCALSSLFTRPIKDIIGKLRPLN) and 292–330 (TFAGIVESLILLAELFGVFWTPPDVSAMIAPLLGDYELQ). The interval 331 to 509 (GPEDLAVELV…GKTHLARELA (179 aa)) is interaction with NS1-2, NS4 and homooligomerization. The region spanning 465-632 (LARIAAARSL…EKAKRDFPGQ (168 aa)) is the SF3 helicase domain. Position 495–502 (495–502 (GKPGIGKT)) interacts with ATP. An important for mitochondrion targeting region spans residues 586–691 (AIIITTNLAN…ASGLLHERLD (106 aa)). The functions as endoplasmic reticulum export signal stretch occupies residues 764 to 770 (YTLESDG). The interval 801-850 (RIRYYVKCVQEALYSIIQIAGAAFVTTRIVKRMNIQDLWSKPQVEDTEDT) is host membrane association. The interval 843–894 (QVEDTEDTANKDGCPKPKDDEEFVVSSDDIKTEGKKGKNKTGRGKKHTAFSS) is disordered. Over residues 850-861 (TANKDGCPKPKD) the composition is skewed to basic and acidic residues. Basic residues predominate over residues 879 to 890 (GKNKTGRGKKHT). The interval 899–904 (DEEYDE) is acidic. Tyrosine 902 carries the post-translational modification O-(5'-phospho-RNA)-tyrosine. The segment at 992-1008 (WADDDRSVDYNEKLDFE) is interaction with host EIF4G. The region spanning 1009-1189 (APPSIWSRIV…QGSEGEATLE (181 aa)) is the Peptidase C37 domain. Active-site for 3CLpro activity residues include histidine 1038, glutamate 1062, and cysteine 1147. The RdRp catalytic domain occupies 1425 to 1546 (KYHYDADYSR…STDINLNPEK (122 aa)). Mg(2+)-binding residues include aspartate 1429, aspartate 1431, aspartate 1533, and glutamate 1534.

As to quaternary structure, homodimer. Homooligomer. Interacts with NTPase; this interaction increases the proapoptotic activity of the NTPase and is crucial for the formation of the viral replication complex. Interacts with NS4; this interaction is crucial for the formation of the viral replication complex. Interacts (via N-terminus) with host VAPA. Interacts with host MAP1LC3A/LC3; this interaction does not seem to be linked to host autophagy, but rather plays a role in the formation of viral factories. Homooligomer. Interacts with NS1-2; this interaction increases the proapoptotic activity of the NTPase and is crucial for the formation of the viral replication complex. Interacts with NS4; this interaction increases the proapoptotic activity of the NTPase. In terms of assembly, homodimer. Monomer; in solution. As to quaternary structure, interacts with NTPase; this interaction increases the proapoptotic activity of the NTPase. Interacts with NS1-2; this interaction is crucial for the formation of the viral replication complex. Monomer. Interacts with the RNA-directed RNA polymerase; this interaction induces the multimerization of the RdRp and enhances its activity. Interacts with host IEF4G1; this interaction plays a role in translation of viral proteins. In terms of assembly, homohexamer; also forms fibrous hexameric oligomer. Interacts with the viral genome-linked protein; this interaction induces the multimerization of the RdRp and enhances its activity. Mg(2+) is required as a cofactor. The cofactor is Mn(2+). In terms of processing, specific enzymatic cleavages in vivo yield mature proteins. 3CLpro is first autocatalytically cleaved, then processes the whole polyprotein. NS1/2-3 and NS3-4 sites are cleaved rapidly and NS4-5, NS5-6, and NS6-7 sites are processed subsequently and less efficiently. Post-translationally, VPg is uridylylated by the polymerase and is covalently attached to the 5'-end of the polyadenylated genomic and subgenomic RNAs. This uridylylated form acts as a nucleotide-peptide primer for the polymerase. Cleaved by host CASP3/caspase 3 at 18-22 h.p.i. The cleavage allows NS1 secretion, which is essential for intestinal infection and resistance to IFN-lambda.

The protein localises to the host endoplasmic reticulum membrane. Its subcellular location is the secreted. It is found in the host mitochondrion. The protein resides in the host Golgi apparatus membrane. It localises to the host cytoplasm. The protein localises to the host perinuclear region. The enzyme catalyses a ribonucleoside 5'-triphosphate + H2O = a ribonucleoside 5'-diphosphate + phosphate + H(+). It carries out the reaction Endopeptidase with a preference for cleavage when the P1 position is occupied by Glu-|-Xaa and the P1' position is occupied by Gly-|-Yaa.. The catalysed reaction is RNA(n) + a ribonucleoside 5'-triphosphate = RNA(n+1) + diphosphate. In terms of biological role, induces the proliferation of the host smooth ER membranes forming long tubular structures. These remodeled membranes probably form the viral factories that contain the replication complex. May play a role in viral replication by interacting with host VAPA, a vesicle-associated membrane protein that plays a role in SNARE-mediated vesicle fusion. This interaction may target replication complex to intracellular membranes. Its function is as follows. Displays NTPase activity, but no helicase activity. Displays RNA chaperone-like activity and destabilizes dsRNA. Induces the formation of convoluted membranes derived from the host ER. These remodeled membranes probably form the viral factories that contain the replication complex. Initiates host cell death by targeting the mitochondrial outer membrane, leading to the permeabilization of mitochondria, programmed host cell death and viral egress. Externalization of host cardiolipin seems to be involved in the process. Probably plays a role in preventing the assembly of host stress granules. Probable key protein responsible for the formation of membrane alterations by the virus. Induces the formation of convoluted membranes derived from the host ER. These remodeled membranes probably form the viral factories that contain the replication complex. May play a role in targeting replication complex to intracellular membranes. Functionally, viral genome-linked protein is covalently linked to the 5'-end of the positive-strand, negative-strand genomic RNAs and subgenomic RNA. Acts as a genome-linked replication primer. May recruit ribosome to viral RNA thereby promoting viral proteins translation. Interacts with host translation initiation complex to allow the translation of viral proteins. Induces the formation of aggregates of RNA-directed RNA polymerase in the presence of RNA. Through its interaction with the viral RNA-directed RNA polymerase, plays a crucial role in enhancing the polymerase activity. In terms of biological role, processes the polyprotein. 3CLpro-RdRp is first released by autocleavage, then all other proteins are cleaved. May cleave polyadenylate-binding protein thereby inhibiting cellular translation. Its function is as follows. Replicates genomic and antigenomic RNA by recognizing replications specific signals. Also transcribes a subgenomic mRNA by initiating RNA synthesis internally on antigenomic RNA. This sgRNA codes for structural proteins. Catalyzes the covalent attachment VPg with viral RNAs. The polypeptide is Genome polyprotein (Lordsdale virus (strain GII/Human/United Kingdom/Lordsdale/1993) (Human enteric calicivirus)).